Consider the following 339-residue polypeptide: 3-isopropylmalate dehydrogenase (339 aa).

Positions 87, 97, 124, and 214 each coordinate substrate. Asp214, Asp238, and Asp242 together coordinate Mg(2+). 274–286 is a binding site for NAD(+); that stretch reads GSAPDIAGQGIAD.

The protein belongs to the isocitrate and isopropylmalate dehydrogenases family. LeuB type 2 subfamily. In terms of assembly, homodimer. The cofactor is Mg(2+). Mn(2+) serves as cofactor.

It localises to the cytoplasm. It catalyses the reaction (2R,3S)-3-isopropylmalate + NAD(+) = 4-methyl-2-oxopentanoate + CO2 + NADH. It participates in amino-acid biosynthesis; L-leucine biosynthesis; L-leucine from 3-methyl-2-oxobutanoate: step 3/4. In terms of biological role, catalyzes the oxidation of 3-carboxy-2-hydroxy-4-methylpentanoate (3-isopropylmalate) to 3-carboxy-4-methyl-2-oxopentanoate. The product decarboxylates to 4-methyl-2 oxopentanoate. In Mycobacterium marinum (strain ATCC BAA-535 / M), this protein is 3-isopropylmalate dehydrogenase.